A 99-amino-acid chain; its full sequence is Large ribosomal subunit protein uL23 (99 aa).

Belongs to the universal ribosomal protein uL23 family. In terms of assembly, part of the 50S ribosomal subunit. Contacts protein L29, and trigger factor when it is bound to the ribosome.

Its function is as follows. One of the early assembly proteins it binds 23S rRNA. One of the proteins that surrounds the polypeptide exit tunnel on the outside of the ribosome. Forms the main docking site for trigger factor binding to the ribosome. This Leifsonia xyli subsp. xyli (strain CTCB07) protein is Large ribosomal subunit protein uL23.